A 287-amino-acid chain; its full sequence is Cyclopropane mycolic acid synthase 1 (287 aa).

S-adenosyl-L-methionine is bound by residues 33 to 34 (YS), 68 to 76 (LLDVGCGWG), 94 to 99 (TLSKNQ), and 123 to 124 (WE). Residue Cys-269 is part of the active site.

The protein belongs to the CFA/CMAS family. In terms of assembly, homodimer.

The protein resides in the cytoplasm. The catalysed reaction is a 1-acyl-2-(9Z)-enoyl-sn-glycero-3-phospholipid + S-adenosyl-L-methionine = a 1-acyl-2-(9-cyclopronane)-acyl-sn-glycero-3-phospholipid + S-adenosyl-L-homocysteine + H(+). Its pathway is lipid metabolism; mycolic acid biosynthesis. Functionally, catalyzes the conversion of a double bond to a cyclopropane ring at the distal position of an alpha mycolic acid via the transfer of a methylene group from S-adenosyl-L-methionine. Cyclopropanated mycolic acids are key factors participating in cell envelope permeability, host immunomodulation and persistence. This chain is Cyclopropane mycolic acid synthase 1 (cmaA1), found in Mycobacterium tuberculosis (strain ATCC 25177 / H37Ra).